We begin with the raw amino-acid sequence, 325 residues long: Glycine--tRNA ligase alpha subunit (325 aa).

It belongs to the class-II aminoacyl-tRNA synthetase family. In terms of assembly, tetramer of two alpha and two beta subunits.

It localises to the cytoplasm. It carries out the reaction tRNA(Gly) + glycine + ATP = glycyl-tRNA(Gly) + AMP + diphosphate. The chain is Glycine--tRNA ligase alpha subunit from Ralstonia nicotianae (strain ATCC BAA-1114 / GMI1000) (Ralstonia solanacearum).